The chain runs to 94 residues: Co-chaperonin GroES (94 aa).

It belongs to the GroES chaperonin family. In terms of assembly, heptamer of 7 subunits arranged in a ring. Interacts with the chaperonin GroEL.

It localises to the cytoplasm. In terms of biological role, together with the chaperonin GroEL, plays an essential role in assisting protein folding. The GroEL-GroES system forms a nano-cage that allows encapsulation of the non-native substrate proteins and provides a physical environment optimized to promote and accelerate protein folding. GroES binds to the apical surface of the GroEL ring, thereby capping the opening of the GroEL channel. This is Co-chaperonin GroES from Thermoanaerobacter pseudethanolicus (strain ATCC 33223 / 39E) (Clostridium thermohydrosulfuricum).